A 155-amino-acid chain; its full sequence is Endoribonuclease YbeY (155 aa).

The Zn(2+) site is built by His114, His118, and His124.

Belongs to the endoribonuclease YbeY family. Zn(2+) is required as a cofactor.

Its subcellular location is the cytoplasm. Functionally, single strand-specific metallo-endoribonuclease involved in late-stage 70S ribosome quality control and in maturation of the 3' terminus of the 16S rRNA. The polypeptide is Endoribonuclease YbeY (Escherichia coli O157:H7).